Consider the following 591-residue polypeptide: L-gulonolactone oxidase 2 (591 aa).

A signal peptide spans 1-27 (MAFTFPPSYRTLVGLYYIFTLMHTAVS). The FAD-binding PCMH-type domain maps to 56 to 238 (STCRAANVAY…SQVTFELQPM (183 aa)).

The protein belongs to the oxygen-dependent FAD-linked oxidoreductase family. It depends on FAD as a cofactor.

The catalysed reaction is L-gulono-1,4-lactone + O2 = L-ascorbate + H2O2 + H(+). The protein operates within cofactor biosynthesis; L-ascorbate biosynthesis. Functionally, catalyzes the oxidation of L-gulono-1,4-lactone to ascorbic acid. L-gulono-1,4-lactone is oxidized to hydrogen peroxide and L-xylo-hexulonolactone which spontaneously isomerizes to L-ascorbate. The polypeptide is L-gulonolactone oxidase 2 (Arabidopsis thaliana (Mouse-ear cress)).